The following is a 155-amino-acid chain: 2-C-methyl-D-erythritol 2,4-cyclodiphosphate synthase (155 aa).

Residues Asp-8 and His-10 each contribute to the a divalent metal cation site. 4-CDP-2-C-methyl-D-erythritol 2-phosphate contacts are provided by residues 8–10 (DVH) and 34–35 (HS). Residue His-42 participates in a divalent metal cation binding. 4-CDP-2-C-methyl-D-erythritol 2-phosphate-binding positions include 56-58 (DIG), 61-65 (FPDTD), 100-106 (AQAPKMA), 132-135 (TTTE), Phe-139, and Arg-142.

The protein belongs to the IspF family. As to quaternary structure, homotrimer. It depends on a divalent metal cation as a cofactor.

It carries out the reaction 4-CDP-2-C-methyl-D-erythritol 2-phosphate = 2-C-methyl-D-erythritol 2,4-cyclic diphosphate + CMP. Its pathway is isoprenoid biosynthesis; isopentenyl diphosphate biosynthesis via DXP pathway; isopentenyl diphosphate from 1-deoxy-D-xylulose 5-phosphate: step 4/6. Involved in the biosynthesis of isopentenyl diphosphate (IPP) and dimethylallyl diphosphate (DMAPP), two major building blocks of isoprenoid compounds. Catalyzes the conversion of 4-diphosphocytidyl-2-C-methyl-D-erythritol 2-phosphate (CDP-ME2P) to 2-C-methyl-D-erythritol 2,4-cyclodiphosphate (ME-CPP) with a corresponding release of cytidine 5-monophosphate (CMP). This Saccharophagus degradans (strain 2-40 / ATCC 43961 / DSM 17024) protein is 2-C-methyl-D-erythritol 2,4-cyclodiphosphate synthase.